The sequence spans 347 residues: Histone deacetylase 11 (347 aa).

Residues 14 to 318 (TRWPIVYSPR…ARIIADSILN (305 aa)) form a histone deacetylase region. His143 is an active-site residue.

This sequence belongs to the histone deacetylase family. As to quaternary structure, interacts with HDAC6.

Its subcellular location is the nucleus. The catalysed reaction is N(6)-acetyl-L-lysyl-[histone] + H2O = L-lysyl-[histone] + acetate. Functionally, responsible for the deacetylation of lysine residues on the N-terminal part of the core histones (H2A, H2B, H3 and H4). Histone deacetylation gives a tag for epigenetic repression and plays an important role in transcriptional regulation, cell cycle progression and developmental events. Histone deacetylases act via the formation of large multiprotein complexes. This chain is Histone deacetylase 11 (HDAC11), found in Macaca fascicularis (Crab-eating macaque).